We begin with the raw amino-acid sequence, 605 residues long: Xylan O-acetyltransferase 7 (605 aa).

The Cytoplasmic segment spans residues M1–P124. The segment at P86–P126 is disordered. The chain crosses the membrane as a helical; Signal-anchor for type II membrane protein span at residues G125–I145. Over N146–A605 the chain is Lumenal. N-linked (GlcNAc...) asparagine glycans are attached at residues N192 and N218. Intrachain disulfides connect C243/C296, C267/C332, C276/C584, and C499/C580. The GDS motif signature appears at G319 to S321. Residue S321 is the Nucleophile of the active site. N351, N363, N471, and N508 each carry an N-linked (GlcNAc...) asparagine glycan. The Proton donor role is filled by D579. The short motif at D579–H582 is the DXXH motif element. H582 (proton acceptor) is an active-site residue.

Belongs to the PC-esterase family. TBL subfamily. In terms of tissue distribution, expressed in roots, leaves and stems.

The protein localises to the golgi apparatus membrane. Its function is as follows. Xylan acetyltransferase required for 2-O- and 3-O-monoacetylation of xylosyl residues in xylan. Catalyzes the 2-O-acetylation of xylan, followed by nonenzymatic acetyl migration to the O-3 position, resulting in products that are monoacetylated at both O-2 and O-3 positions. This Oryza sativa subsp. japonica (Rice) protein is Xylan O-acetyltransferase 7.